Reading from the N-terminus, the 60-residue chain is Large ribosomal subunit protein uL30 (60 aa).

The protein belongs to the universal ribosomal protein uL30 family. Part of the 50S ribosomal subunit.

This chain is Large ribosomal subunit protein uL30, found in Streptococcus suis (strain 98HAH33).